The chain runs to 167 residues: Large ribosomal subunit protein uL10 (167 aa).

This sequence belongs to the universal ribosomal protein uL10 family. As to quaternary structure, part of the ribosomal stalk of the 50S ribosomal subunit. The N-terminus interacts with L11 and the large rRNA to form the base of the stalk. The C-terminus forms an elongated spine to which L12 dimers bind in a sequential fashion forming a multimeric L10(L12)X complex.

Functionally, forms part of the ribosomal stalk, playing a central role in the interaction of the ribosome with GTP-bound translation factors. This Latilactobacillus sakei subsp. sakei (strain 23K) (Lactobacillus sakei subsp. sakei) protein is Large ribosomal subunit protein uL10.